The primary structure comprises 197 residues: ATP-dependent Clp protease proteolytic subunit (197 aa).

The active-site Nucleophile is Ser-100. The active site involves His-125.

This sequence belongs to the peptidase S14 family. Component of the chloroplastic Clp protease core complex.

The protein resides in the plastid. The protein localises to the chloroplast stroma. The catalysed reaction is Hydrolysis of proteins to small peptides in the presence of ATP and magnesium. alpha-casein is the usual test substrate. In the absence of ATP, only oligopeptides shorter than five residues are hydrolyzed (such as succinyl-Leu-Tyr-|-NHMec, and Leu-Tyr-Leu-|-Tyr-Trp, in which cleavage of the -Tyr-|-Leu- and -Tyr-|-Trp bonds also occurs).. Its function is as follows. Cleaves peptides in various proteins in a process that requires ATP hydrolysis. Has a chymotrypsin-like activity. Plays a major role in the degradation of misfolded proteins. This Angiopteris evecta (Mule's foot fern) protein is ATP-dependent Clp protease proteolytic subunit.